The primary structure comprises 244 residues: Mitochondrial import inner membrane translocase subunit Tim21 (244 aa).

A mitochondrion-targeting transit peptide spans 1–18 (MICAFLRVVQHAEKLHGS). The tract at residues 65 to 96 (TQGPDPRKAKEDSTKQVSIRRNQREETGVSMS) is disordered. Residues 69–78 (DPRKAKEDST) show a composition bias toward basic and acidic residues. The helical transmembrane segment at 107–127 (SYLIVVLFGVGLTGGLLYAIF) threads the bilayer.

The protein belongs to the TIM21 family. In terms of assembly, component of the TIM23 complex. Component of the MITRAC (mitochondrial translation regulation assembly intermediate of cytochrome c oxidase complex) complex, the core components of this complex being COA3/MITRAC12 and COX14. Interacts with COA3 and MT-CO1/COX1.

It localises to the mitochondrion membrane. Participates in the translocation of transit peptide-containing proteins across the mitochondrial inner membrane. Also required for assembly of mitochondrial respiratory chain complex I and complex IV as component of the MITRAC (mitochondrial translation regulation assembly intermediate of cytochrome c oxidase complex) complex. Probably shuttles between the presequence translocase and respiratory-chain assembly intermediates in a process that promotes incorporation of early nuclear-encoded subunits into these complexes. The sequence is that of Mitochondrial import inner membrane translocase subunit Tim21 (Timm21) from Mus musculus (Mouse).